The sequence spans 139 residues: Actin-depolymerizing factor 1 (139 aa).

The 135-residue stretch at 5–139 (ASGMAVCDEC…SMDIVKSRAL (135 aa)) folds into the ADF-H domain.

Belongs to the actin-binding proteins ADF family.

Actin-depolymerizing protein. Severs actin filaments (F-actin) and binds to actin monomers. The protein is Actin-depolymerizing factor 1 (ADF1) of Oryza sativa subsp. japonica (Rice).